Reading from the N-terminus, the 147-residue chain is Hemoglobin subunit epsilon (147 aa).

A Globin domain is found at 3–147 (HFTAEEKSTI…VATALAHKYH (145 aa)). Serine 14 and serine 51 each carry phosphoserine. The heme b site is built by histidine 64 and histidine 93.

The protein belongs to the globin family. In terms of assembly, heterotetramer of two alpha chains and two epsilon chains in early embryonic hemoglobin Gower-2; two zeta chains and two epsilon chains in early embryonic hemoglobin Gower-1. In terms of tissue distribution, red blood cells.

The epsilon chain is a beta-type chain of early mammalian embryonic hemoglobin. In Propithecus verreauxi (White sifaka), this protein is Hemoglobin subunit epsilon (HBE1).